A 182-amino-acid chain; its full sequence is Translation initiation factor IF-3 (182 aa).

Belongs to the IF-3 family. Monomer.

The protein localises to the cytoplasm. In terms of biological role, IF-3 binds to the 30S ribosomal subunit and shifts the equilibrium between 70S ribosomes and their 50S and 30S subunits in favor of the free subunits, thus enhancing the availability of 30S subunits on which protein synthesis initiation begins. The protein is Translation initiation factor IF-3 of Endomicrobium trichonymphae.